A 54-amino-acid polypeptide reads, in one-letter code: Gene product 16.6 (54 aa).

This sequence belongs to the phi29likevirus gp16.6 family.

In Bacillus subtilis (Bacteriophage phi-15), this protein is Gene product 16.6 (16.6).